The primary structure comprises 374 residues: Chaperone protein DnaJ (374 aa).

A J domain is found at 5–70 (DYYEVLGVER…SKRAAYDQYG (66 aa)). The CR-type zinc finger occupies 133 to 211 (GTTVNIRVPT…CHGEGRVEEY (79 aa)). Positions 146, 149, 163, 166, 185, 188, 199, and 202 each coordinate Zn(2+). CXXCXGXG motif repeat units lie at residues 146–153 (CKPCDGSG), 163–170 (CPTCGGIG), 185–192 (CPRCHGQG), and 199–206 (CDSCHGEG).

It belongs to the DnaJ family. As to quaternary structure, homodimer. Zn(2+) is required as a cofactor.

It localises to the cytoplasm. Functionally, participates actively in the response to hyperosmotic and heat shock by preventing the aggregation of stress-denatured proteins and by disaggregating proteins, also in an autonomous, DnaK-independent fashion. Unfolded proteins bind initially to DnaJ; upon interaction with the DnaJ-bound protein, DnaK hydrolyzes its bound ATP, resulting in the formation of a stable complex. GrpE releases ADP from DnaK; ATP binding to DnaK triggers the release of the substrate protein, thus completing the reaction cycle. Several rounds of ATP-dependent interactions between DnaJ, DnaK and GrpE are required for fully efficient folding. Also involved, together with DnaK and GrpE, in the DNA replication of plasmids through activation of initiation proteins. The protein is Chaperone protein DnaJ of Pseudomonas fluorescens (strain ATCC BAA-477 / NRRL B-23932 / Pf-5).